The chain runs to 207 residues: Pyridoxine/pyridoxamine 5'-phosphate oxidase (207 aa).

FMN is bound by residues 53-58 (RMVLLK), 68-69 (YT), K75, and Q97. A substrate-binding site is contributed by K58. Substrate contacts are provided by Y115, R119, and S123. Residues 132–133 (QS) and W177 contribute to the FMN site. 183 to 185 (RLH) is a binding site for substrate. R187 is an FMN binding site.

Belongs to the pyridoxamine 5'-phosphate oxidase family. As to quaternary structure, homodimer. It depends on FMN as a cofactor.

The catalysed reaction is pyridoxamine 5'-phosphate + O2 + H2O = pyridoxal 5'-phosphate + H2O2 + NH4(+). It catalyses the reaction pyridoxine 5'-phosphate + O2 = pyridoxal 5'-phosphate + H2O2. It functions in the pathway cofactor metabolism; pyridoxal 5'-phosphate salvage; pyridoxal 5'-phosphate from pyridoxamine 5'-phosphate: step 1/1. Its pathway is cofactor metabolism; pyridoxal 5'-phosphate salvage; pyridoxal 5'-phosphate from pyridoxine 5'-phosphate: step 1/1. In terms of biological role, catalyzes the oxidation of either pyridoxine 5'-phosphate (PNP) or pyridoxamine 5'-phosphate (PMP) into pyridoxal 5'-phosphate (PLP). This Bartonella henselae (strain ATCC 49882 / DSM 28221 / CCUG 30454 / Houston 1) (Rochalimaea henselae) protein is Pyridoxine/pyridoxamine 5'-phosphate oxidase.